Here is a 163-residue protein sequence, read N- to C-terminus: ATP synthase subunit b', chloroplastic (163 aa).

The helical transmembrane segment at 26–46 (ATLPLMAVQILLFMVILNAVF) threads the bilayer.

It belongs to the ATPase B chain family. In terms of assembly, F-type ATPases have 2 components, F(1) - the catalytic core - and F(0) - the membrane proton channel. F(1) has five subunits: alpha(3), beta(3), gamma(1), delta(1), epsilon(1). F(0) has four main subunits: a(1), b(1), b'(1) and c(10-14). The alpha and beta chains form an alternating ring which encloses part of the gamma chain. F(1) is attached to F(0) by a central stalk formed by the gamma and epsilon chains, while a peripheral stalk is formed by the delta, b and b' chains.

Its subcellular location is the plastid. It localises to the chloroplast thylakoid membrane. F(1)F(0) ATP synthase produces ATP from ADP in the presence of a proton or sodium gradient. F-type ATPases consist of two structural domains, F(1) containing the extramembraneous catalytic core and F(0) containing the membrane proton channel, linked together by a central stalk and a peripheral stalk. During catalysis, ATP synthesis in the catalytic domain of F(1) is coupled via a rotary mechanism of the central stalk subunits to proton translocation. Functionally, component of the F(0) channel, it forms part of the peripheral stalk, linking F(1) to F(0). The b'-subunit is a diverged and duplicated form of b found in plants and photosynthetic bacteria. The chain is ATP synthase subunit b', chloroplastic from Guillardia theta (Cryptophyte).